The chain runs to 658 residues: Pro-secreted protein ORF2 (658 aa).

The signal sequence occupies residues 1-19; that stretch reads MRSRALLFLLFVLLPMLPA. Positions 62-124 are disordered; the sequence is SDIPAAAGTG…PDTAPVPDAD (63 aa). Positions 91–122 are enriched in low complexity; the sequence is RPAASTRRRPAPAGASPLTAVAPAPDTAPVPD. 2 N-linked (GlcNAc...) asparagine; by host glycosylation sites follow: asparagine 135 and asparagine 308. The tract at residues 366–392 is particle formation; the sequence is IALTLFNLADTLLGGLPTELISSAGGQ. Asparagine 560 carries N-linked (GlcNAc...) asparagine; by host glycosylation. The oligomerization stretch occupies residues 583–608; it reads TTNLGSGPVSVSAVGVLAPHSALAAL.

The protein belongs to the hepevirus capsid protein family. Homodimer. In terms of assembly, self-assembles to form the capsid. The capsid is dominated by dimers that define the 30 morphological units. Interacts with phosphorylated protein ORF3. Interacts with host TMEM134. Interacts with host ASGR1 and ASGR2; these interactions facilitate infection of host hepatocytes. Post-translationally, cleaved by host protease in the N-terminus. N-glycosylated. In terms of processing, not N-glycosylated. The C-terminus of the capsid protein ORF2 is truncated in non-enveloped virions shedded in feces, probably due to host proteases.

The protein localises to the secreted. It localises to the virion. The protein resides in the host cytoplasm. Its subcellular location is the host endoplasmic reticulum. It is found in the host Golgi apparatus. The protein localises to the host cell surface. It localises to the host nucleus. Functionally, plays a role in the inhibition of host antibody-mediated neutralization without blocking viral cell entry. Its function is as follows. Forms an icosahedral capsid with a T=1 symmetry and a 34 nm diameter. The capsid is composed of 60 copies linked to each other. Binds to the 5' end of the genomic RNA to mediate genome encapsidation. Binds to heparin surface proteoglycans (HSPGs) to mediate viral entry. Additionally, the interactions with host ASGR1 and ASGR2 facilitate viral infection of hepatocytes. Inhibits IFN production by blocking host TBK1-induced IRF3 phosphorylation. The nuclear form probably modulates host gene expression. This is Pro-secreted protein ORF2 from Bandicota bengalensis (lesser bandicoot rat).